Here is an 835-residue protein sequence, read N- to C-terminus: Translation initiation factor IF-2 (835 aa).

The tract at residues 1–240 is disordered; it reads MSDSDGKKTL…RKQERARQKA (240 aa). Residues 50 to 59 are compositionally biased toward gly residues; the sequence is AGKGGAGGVA. Residues 86–152 show a composition bias toward basic and acidic residues; it reads KAREAEEAAQ…AEAAKKRAAA (67 aa). Positions 153–169 are enriched in low complexity; the sequence is DKAAAAAPKSDAGVAPA. Residues 184 to 205 are compositionally biased toward basic and acidic residues; sequence RKAEREREERGRGAKGRNDGGR. The 169-residue stretch at 332 to 500 folds into the tr-type G domain; it reads PRPPVITIMG…AIALQAEILE (169 aa). A G1 region spans residues 341–348; it reads GHVDHGKT. 341–348 lines the GTP pocket; sequence GHVDHGKT. A G2 region spans residues 366–370; it reads GITQH. The G3 stretch occupies residues 388–391; sequence DTPG. Residues 388 to 392 and 442 to 445 contribute to the GTP site; these read DTPGH and NKID. A G4 region spans residues 442-445; the sequence is NKID. The interval 478 to 480 is G5; it reads SAH.

It belongs to the TRAFAC class translation factor GTPase superfamily. Classic translation factor GTPase family. IF-2 subfamily.

The protein localises to the cytoplasm. Its function is as follows. One of the essential components for the initiation of protein synthesis. Protects formylmethionyl-tRNA from spontaneous hydrolysis and promotes its binding to the 30S ribosomal subunits. Also involved in the hydrolysis of GTP during the formation of the 70S ribosomal complex. In Ruegeria sp. (strain TM1040) (Silicibacter sp.), this protein is Translation initiation factor IF-2.